The chain runs to 401 residues: 1-deoxy-D-xylulose 5-phosphate reductoisomerase (401 aa).

Residues Thr-11, Gly-12, Ser-13, Ile-14, Arg-38, Asn-39, and Asn-125 each coordinate NADPH. Position 126 (Lys-126) interacts with 1-deoxy-D-xylulose 5-phosphate. Glu-127 is an NADPH binding site. Position 151 (Asp-151) interacts with Mn(2+). Ser-152, Glu-153, Ser-179, and His-202 together coordinate 1-deoxy-D-xylulose 5-phosphate. Glu-153 is a Mn(2+) binding site. Gly-208 provides a ligand contact to NADPH. 4 residues coordinate 1-deoxy-D-xylulose 5-phosphate: Ser-215, Asn-220, Lys-221, and Glu-224. Glu-224 is a Mn(2+) binding site.

This sequence belongs to the DXR family. Requires Mg(2+) as cofactor. Mn(2+) serves as cofactor.

It catalyses the reaction 2-C-methyl-D-erythritol 4-phosphate + NADP(+) = 1-deoxy-D-xylulose 5-phosphate + NADPH + H(+). It participates in isoprenoid biosynthesis; isopentenyl diphosphate biosynthesis via DXP pathway; isopentenyl diphosphate from 1-deoxy-D-xylulose 5-phosphate: step 1/6. Its function is as follows. Catalyzes the NADPH-dependent rearrangement and reduction of 1-deoxy-D-xylulose-5-phosphate (DXP) to 2-C-methyl-D-erythritol 4-phosphate (MEP). The protein is 1-deoxy-D-xylulose 5-phosphate reductoisomerase of Paraburkholderia phymatum (strain DSM 17167 / CIP 108236 / LMG 21445 / STM815) (Burkholderia phymatum).